The chain runs to 922 residues: Probable dipeptidyl-aminopeptidase B (922 aa).

The span at methionine 1–proline 16 shows a compositional bias: basic and acidic residues. Residues methionine 1 to serine 21 are disordered. The Cytoplasmic portion of the chain corresponds to methionine 1–alanine 99. Residues leucine 100–phenylalanine 120 form a helical; Signal-anchor for type II membrane protein membrane-spanning segment. Residues arginine 121–cysteine 922 are Vacuolar-facing. Asparagine 135, asparagine 200, asparagine 351, and asparagine 574 each carry an N-linked (GlcNAc...) asparagine glycan. Residue serine 756 is the Charge relay system of the active site. Residue asparagine 815 is glycosylated (N-linked (GlcNAc...) asparagine). Active-site charge relay system residues include aspartate 833 and histidine 866. Asparagine 902 is a glycosylation site (N-linked (GlcNAc...) asparagine).

The protein belongs to the peptidase S9B family.

It localises to the vacuole membrane. The enzyme catalyses Release of an N-terminal dipeptide, Xaa-Yaa-|-Zaa-, from a polypeptide, preferentially when Yaa is Pro, provided Zaa is neither Pro nor hydroxyproline.. In terms of biological role, type IV dipeptidyl-peptidase which removes N-terminal dipeptides sequentially from polypeptides having unsubstituted N-termini provided that the penultimate residue is proline. The sequence is that of Probable dipeptidyl-aminopeptidase B (DAPB) from Ajellomyces capsulatus (strain NAm1 / WU24) (Darling's disease fungus).